The primary structure comprises 131 residues: GATA zinc finger domain-containing protein 2 (131 aa).

Residues 21 to 55 are compositionally biased toward low complexity; it reads STATDATSADGAASETDAASATDTTSATDPTSATD. A disordered region spans residues 21–85; that stretch reads STATDATSAD…RGRPYISTPP (65 aa). Positions 57–74 are enriched in polar residues; it reads IATTNTTGITSSGPTTNG. A GATA-type zinc finger spans residues 88 to 115; that stretch reads CYDCGRTRSPYWRKGTYNGQVVHLCNAC.

The sequence is that of GATA zinc finger domain-containing protein 2 (comH) from Dictyostelium discoideum (Social amoeba).